The primary structure comprises 361 residues: D-alanine--D-alanine ligase (361 aa).

An ATP-grasp domain is found at 134 to 344 (KILAQRAGVP…YTDLITKLID (211 aa)). 169–224 (ASQLGSDLFVKPSNQGSSVGVSHVTNEKEYKVALAEAFKYDDKVLVEETVHGTEVE) contributes to the ATP binding site. Asp-297, Glu-311, and Asn-313 together coordinate Mg(2+).

This sequence belongs to the D-alanine--D-alanine ligase family. Requires Mg(2+) as cofactor. The cofactor is Mn(2+).

Its subcellular location is the cytoplasm. It carries out the reaction 2 D-alanine + ATP = D-alanyl-D-alanine + ADP + phosphate + H(+). It functions in the pathway cell wall biogenesis; peptidoglycan biosynthesis. Functionally, cell wall formation. The polypeptide is D-alanine--D-alanine ligase (Lactobacillus johnsonii (strain CNCM I-12250 / La1 / NCC 533)).